The sequence spans 72 residues: uncharacterized protein (72 aa).

This sequence belongs to the ycf76 family.

Its subcellular location is the plastid. It localises to the chloroplast. This is an uncharacterized protein from Oryza nivara (Indian wild rice).